The sequence spans 653 residues: Acetyl-coenzyme A synthetase (653 aa).

CoA-binding positions include 195–198 and threonine 314; that span reads RGGK. Residues 390–392, 414–419, aspartate 505, and arginine 520 each bind ATP; these read GEP and DTWWQT. Serine 528 is a binding site for CoA. An ATP-binding site is contributed by arginine 531. Residues valine 542 and valine 547 each coordinate Mg(2+). Lysine 617 carries the post-translational modification N6-acetyllysine.

The protein belongs to the ATP-dependent AMP-binding enzyme family. Mg(2+) is required as a cofactor. In terms of processing, acetylated. Deacetylation by the SIR2-homolog deacetylase activates the enzyme.

It carries out the reaction acetate + ATP + CoA = acetyl-CoA + AMP + diphosphate. Catalyzes the conversion of acetate into acetyl-CoA (AcCoA), an essential intermediate at the junction of anabolic and catabolic pathways. AcsA undergoes a two-step reaction. In the first half reaction, AcsA combines acetate with ATP to form acetyl-adenylate (AcAMP) intermediate. In the second half reaction, it can then transfer the acetyl group from AcAMP to the sulfhydryl group of CoA, forming the product AcCoA. This is Acetyl-coenzyme A synthetase from Pasteurella multocida (strain Pm70).